A 417-amino-acid polypeptide reads, in one-letter code: Glutamate-1-semialdehyde 2,1-aminomutase (417 aa).

An N6-(pyridoxal phosphate)lysine modification is found at Lys267.

It belongs to the class-III pyridoxal-phosphate-dependent aminotransferase family. HemL subfamily. In terms of assembly, homodimer. It depends on pyridoxal 5'-phosphate as a cofactor.

The protein resides in the cytoplasm. The catalysed reaction is (S)-4-amino-5-oxopentanoate = 5-aminolevulinate. It functions in the pathway porphyrin-containing compound metabolism; protoporphyrin-IX biosynthesis; 5-aminolevulinate from L-glutamyl-tRNA(Glu): step 2/2. In Solibacter usitatus (strain Ellin6076), this protein is Glutamate-1-semialdehyde 2,1-aminomutase.